The following is a 55-amino-acid chain: MAKPATVKIKLVSTADTGFYYVTKKNPRNITEKMTFRKYDPVVRKHVEFKEAKIK.

This sequence belongs to the bacterial ribosomal protein bL33 family.

The protein is Large ribosomal subunit protein bL33 of Erythrobacter litoralis (strain HTCC2594).